Consider the following 190-residue polypeptide: Dynactin subunit 6 (190 aa).

Phosphothreonine; by CDK1 is present on T186.

This sequence belongs to the dynactin subunits 5/6 family. Dynactin subunit 6 subfamily. In terms of assembly, subunit of dynactin, a multiprotein complex part of a tripartite complex with dynein and a adapter, such as BICDL1, BICD2 or HOOK3. The dynactin complex is built around ACTR1A/ACTB filament and consists of an actin-related filament composed of a shoulder domain, a pointed end and a barbed end. Its length is defined by its flexible shoulder domain. The soulder is composed of 2 DCTN1 subunits, 4 DCTN2 and 2 DCTN3. The 4 DCNT2 (via N-terminus) bind the ACTR1A filament and act as molecular rulers to determine the length. The pointed end is important for binding dynein-dynactin cargo adapters. Consists of 4 subunits: ACTR10, DCNT4, DCTN5 and DCTN6. Within the complex DCTN6 forms a heterodimer with DCTN5. The barbed end is composed of a CAPZA1:CAPZB heterodimers, which binds ACTR1A/ACTB filament and dynactin and stabilizes dynactin. Interacts with PLK1. Interacts with N4BP2L1. In terms of processing, phosphorylation at Thr-186 by CDK1 during mitotic prometaphase creates a binding site for PLK1 that facilitates its recruitment to kinetochores.

It is found in the cytoplasm. It localises to the cytoskeleton. The protein localises to the chromosome. Its subcellular location is the centromere. The protein resides in the kinetochore. In terms of biological role, part of the dynactin complex that activates the molecular motor dynein for ultra-processive transport along microtubules. The chain is Dynactin subunit 6 (DCTN6) from Pongo abelii (Sumatran orangutan).